Reading from the N-terminus, the 207-residue chain is Small ribosomal subunit protein uS4c (207 aa).

The disordered stretch occupies residues 20-52; it reads GFSKKIDRNHTPPGQHGWKKKASDQKKSKESQY. The span at 40-52 shows a compositional bias: basic and acidic residues; that stretch reads KASDQKKSKESQY. Positions 97–158 constitute an S4 RNA-binding domain; sequence MRLDNIIYRL…NSQQLIKNYL (62 aa).

It belongs to the universal ribosomal protein uS4 family. In terms of assembly, part of the 30S ribosomal subunit. Contacts protein S5. The interaction surface between S4 and S5 is involved in control of translational fidelity.

It localises to the plastid. Functionally, one of the primary rRNA binding proteins, it binds directly to 16S rRNA where it nucleates assembly of the body of the 30S subunit. With S5 and S12 plays an important role in translational accuracy. The polypeptide is Small ribosomal subunit protein uS4c (rps4) (Prototheca wickerhamii).